A 314-amino-acid polypeptide reads, in one-letter code: Malate dehydrogenase (314 aa).

Residues 11-16 (GSGNIG) and aspartate 35 contribute to the NAD(+) site. 2 residues coordinate substrate: arginine 84 and arginine 90. Residues asparagine 97 and 120-122 (ITN) each bind NAD(+). Substrate contacts are provided by asparagine 122 and arginine 153. Histidine 177 (proton acceptor) is an active-site residue.

It belongs to the LDH/MDH superfamily. MDH type 3 family.

It carries out the reaction (S)-malate + NAD(+) = oxaloacetate + NADH + H(+). Catalyzes the reversible oxidation of malate to oxaloacetate. This chain is Malate dehydrogenase, found in Rickettsia rickettsii (strain Iowa).